A 121-amino-acid chain; its full sequence is UPF0102 protein Strop_1320 (121 aa).

This sequence belongs to the UPF0102 family.

The chain is UPF0102 protein Strop_1320 from Salinispora tropica (strain ATCC BAA-916 / DSM 44818 / JCM 13857 / NBRC 105044 / CNB-440).